We begin with the raw amino-acid sequence, 473 residues long: Allene oxide synthase CYP74A2 (473 aa).

Residues K88, H119, and K123 each coordinate heme b. Residues S199 and K282 each coordinate (13S)-hydroperoxy-(9Z,11E)-octadecadienoate. Positions 424 and 426 each coordinate heme b.

Belongs to the cytochrome P450 family. Requires heme b as cofactor.

The enzyme catalyses (13S)-hydroperoxy-(9Z,11E,15Z)-octadecatrienoate = (9Z,13S,15Z)-12,13-epoxyoctadeca-9,11,15-trienoate + H2O. It carries out the reaction (13S)-hydroperoxy-(9Z,11E)-octadecadienoate = (9Z,13S)-12,13-epoxyoctadeca-9,11-dienoate + H2O. The protein operates within lipid metabolism; oxylipin biosynthesis. Its function is as follows. Cytochrome P450 enzyme involved in the biosynthesis of oxylipin jasmonates, important phytohormones acting as growth regulators and signaling molecules for plant defense. Functions as an allene oxide synthase that converts hydroperoxy fatty acids to unstable allene epoxides. Catalyzes the dehydration of 13-HPOTE ((13S)-hydroperoxy-(9Z,11E,15Z)-octadecatrienoate). Also catalyzes the dehydration of 13-HPODE ((13S)-hydroperoxy-(9Z,11E)-octadecadienoate). The polypeptide is Allene oxide synthase CYP74A2 (Parthenium argentatum (Guayule rubber plant)).